The chain runs to 523 residues: Keratin, type II cytoskeletal 71 (523 aa).

Residues 1–129 (MSRQFTCKSG…DPEIQKVRAQ (129 aa)) form a head region. A coil 1A region spans residues 130 to 165 (EREQIKALNNKFASFIDKVRFLEQQNQVLETKWELL). The IF rod domain maps to 130-443 (EREQIKALNN…KLLESEECRM (314 aa)). Residues 166-184 (QQLDLNNCKNNLEPILEGY) are linker 1. Residues 185–276 (ISNLRKQLET…CLFEAEITQI (92 aa)) form a coil 1B region. Residues 277–300 (QSHISDMSVILSMDNNRNLDLDSI) form a linker 12 region. Positions 301-439 (IDEVRTQYEE…ATYRKLLESE (139 aa)) are coil 2. Residues 440–523 (ECRMSGEFPS…LSAPSKKTSR (84 aa)) are tail. The segment at 492–523 (GGEGRSRGSANDYKDTLGKGSSLSAPSKKTSR) is disordered. Residues 493–508 (GEGRSRGSANDYKDTL) are compositionally biased toward basic and acidic residues. Positions 510-523 (KGSSLSAPSKKTSR) are enriched in polar residues.

It belongs to the intermediate filament family. As to quaternary structure, heterodimer of a type I and a type II keratin. Associates with KRT16 and/or KRT17. As to expression, highly expressed in hair follicles from scalp. Specifically expressed in the inner root sheath (IRS) of the hair follicle. Present in the all 3 IRS layers: the cuticle, the Henle and the Huxley layers. Also detected in the pseudopods of specialized Huxley cells, termed Fluegelzellen, along the area of differentiated Henle cells (at protein level).

The protein resides in the cytoplasm. It is found in the cytoskeleton. Its function is as follows. Plays a central role in hair formation. Essential component of keratin intermediate filaments in the inner root sheath (IRS) of the hair follicle. In Homo sapiens (Human), this protein is Keratin, type II cytoskeletal 71 (KRT71).